The primary structure comprises 98 residues: uncharacterized protein (98 aa).

The protein belongs to the HesB/IscA family.

This is an uncharacterized protein from Staphylococcus aureus (strain USA300).